Reading from the N-terminus, the 63-residue chain is DNA-directed RNA polymerase subunit omega (63 aa).

This sequence belongs to the RNA polymerase subunit omega family. The RNAP catalytic core consists of 2 alpha, 1 beta, 1 beta' and 1 omega subunit. When a sigma factor is associated with the core the holoenzyme is formed, which can initiate transcription.

The enzyme catalyses RNA(n) + a ribonucleoside 5'-triphosphate = RNA(n+1) + diphosphate. Its function is as follows. Promotes RNA polymerase assembly. Latches the N- and C-terminal regions of the beta' subunit thereby facilitating its interaction with the beta and alpha subunits. The sequence is that of DNA-directed RNA polymerase subunit omega from Blochmanniella pennsylvanica (strain BPEN).